The primary structure comprises 144 residues: MHLNTLKPAEGAKKLAKRKGRGQGSGNGKMAGRGHKGQKSRSGGMPKIGFEGGQMPLQRRLPKVGFTSRKSAYAAEIRLDVLSSVDSDVIDLPALKAANLVSEKIKTVKVINSGEMKKAVKISGLKVTAGAKATIEAAGGSVEV.

Positions 1-54 (MHLNTLKPAEGAKKLAKRKGRGQGSGNGKMAGRGHKGQKSRSGGMPKIGFEGGQ) are disordered. Over residues 22-31 (GQGSGNGKMA) the composition is skewed to gly residues.

Belongs to the universal ribosomal protein uL15 family. In terms of assembly, part of the 50S ribosomal subunit.

Its function is as follows. Binds to the 23S rRNA. The polypeptide is Large ribosomal subunit protein uL15 (Hydrogenovibrio crunogenus (strain DSM 25203 / XCL-2) (Thiomicrospira crunogena)).